The primary structure comprises 397 residues: MAKAKFERTKPHVNIGTIGHVDHGKTTLTAAISRVLSERLPSNTNVKQDFDAIDSAPEERQRGITINISHIEYETEKRHYAHVDAPGHADYIKNMITGAAQMDGAILVVAATDGAMAQTREHVLLAKQVGVPYLLVALNKADMVSDEEILELVELEVRELLSNHGFDGENVPVVRVSGLKALEGDQKWGDAVMELMKAVDESIPDPVRDRDKPFLMPIEDVFTITGRGTVVTGRAERGVLAVNSEVEIVGIRPTQKTTVTGIEMFRKQLDEAWAGENCGLLLRGTKREDVERGQVVVKPGSVTPHTKFEGKAYILSKDEGGRHNPFYSNYRPQFYFRTTDVTGVITLPEGTEMVMPGDTISITVDLIQPIAMEEGLGFAIREGGRTVGAGTVVKILE.

Positions 10–207 (KPHVNIGTIG…AVDESIPDPV (198 aa)) constitute a tr-type G domain. Residues 19 to 26 (GHVDHGKT) are G1. 19–26 (GHVDHGKT) provides a ligand contact to GTP. Residue T26 participates in Mg(2+) binding. The tract at residues 63–67 (GITIN) is G2. Positions 84–87 (DAPG) are G3. Residues 84–88 (DAPGH) and 139–142 (NKAD) each bind GTP. The tract at residues 139–142 (NKAD) is G4. A G5 region spans residues 177–179 (SGL).

The protein belongs to the TRAFAC class translation factor GTPase superfamily. Classic translation factor GTPase family. EF-Tu/EF-1A subfamily. As to quaternary structure, monomer.

Its subcellular location is the cytoplasm. It carries out the reaction GTP + H2O = GDP + phosphate + H(+). Functionally, GTP hydrolase that promotes the GTP-dependent binding of aminoacyl-tRNA to the A-site of ribosomes during protein biosynthesis. In Tropheryma whipplei (strain Twist) (Whipple's bacillus), this protein is Elongation factor Tu.